A 242-amino-acid chain; its full sequence is ATP synthase subunit a (242 aa).

Helical transmembrane passes span 29 to 49 (SSIY…LAFY), 84 to 104 (FIPL…LGMT), 114 to 134 (IIVT…VGFV), 140 to 160 (FLTL…MIVI), 189 to 209 (VIAG…IPLM), and 210 to 230 (MILI…FTIL).

The protein belongs to the ATPase A chain family. In terms of assembly, F-type ATPases have 2 components, CF(1) - the catalytic core - and CF(0) - the membrane proton channel. CF(1) has five subunits: alpha(3), beta(3), gamma(1), delta(1), epsilon(1). CF(0) has three main subunits: a(1), b(2) and c(9-12). The alpha and beta chains form an alternating ring which encloses part of the gamma chain. CF(1) is attached to CF(0) by a central stalk formed by the gamma and epsilon chains, while a peripheral stalk is formed by the delta and b chains.

The protein localises to the cell inner membrane. Functionally, key component of the proton channel; it plays a direct role in the translocation of protons across the membrane. In Rickettsia massiliae (strain Mtu5), this protein is ATP synthase subunit a.